Here is a 609-residue protein sequence, read N- to C-terminus: MFS siderochrome iron transporter 1 (609 aa).

2 stretches are compositionally biased toward basic and acidic residues: residues 1 to 17 (MSALTKIREGLAREDNT) and 25 to 34 (PHEKEIHETP). The tract at residues 1–69 (MSALTKIREG…NDSDVPSEDV (69 aa)) is disordered. Transmembrane regions (helical) follow at residues 81-101 (LTWGKGSLAALLCLIWTLFLI), 125-145 (LMTTIPIVSDAMTAACYIPMA), 154-174 (AEGFLLMSGFATLGLILMAVS), 182-202 (AAQVFYSVGWGGMIYAVGVLA), 220-240 (SPYMITAFAGSKAAAAFVIDV), 245-265 (WGFGWIALVLPCVTIPLFLVL), 300-320 (VIGIFLFGGGLVVFLLPFNLA), 329-349 (TGYIIAMIIVGFCTLIFFGVW), 368-390 (SVVAACMIDLTYQVSYYTWNYFF), 407-427 (YVNSTFQVVSGVLLFIVGFLI), 432-452 (FYKWTFYFAVPIYIFALGLMI), 469-489 (IFISIGGAVFILVMQLAVLAA), 496-516 (AAALATLYVAGGVGGAVGGAI), and 573-593 (IRMLAAGVGIASLFFIWVPML).

The protein belongs to the major facilitator superfamily.

The protein resides in the cell membrane. Its function is as follows. Major facilitator transporter involved in extracellular siderophore uptake. Gibberella zeae produces extracellular coprogen-type siderophores as well as the intracellular siderophore ferricrocin. The role of extracellular siderophores is to supply iron to the fungus during plant infection, and the intracellular ferricrocin is required for intracellular iron distribution and storage with a crucial role in ascus and ascospore development. The sequence is that of MFS siderochrome iron transporter 1 from Gibberella zeae (strain ATCC MYA-4620 / CBS 123657 / FGSC 9075 / NRRL 31084 / PH-1) (Wheat head blight fungus).